The chain runs to 198 residues: Lipid A 4'-phosphatase (198 aa).

Residues Ala-143–Phe-165 traverse the membrane as a helical segment.

This sequence belongs to the lipid A LpxF 4'-phosphatase family.

Its subcellular location is the cell inner membrane. Its pathway is bacterial outer membrane biogenesis; LPS lipid A biosynthesis. Its function is as follows. Removes the 4'-phosphate group from tetra- and hexaacylated lipid A species, has no 1-phosphatase or Kdo hydrolase activity. Absence of the 4'-phosphate group renders the bacteria resistant to host-derived cationic antimicrobial peptides (CAMP), allowing it to camouflage itself from the host innate immune response, and plays a critical role in the long-term colonization of the host's stomach. The chain is Lipid A 4'-phosphatase from Helicobacter pylori (strain J99 / ATCC 700824) (Campylobacter pylori J99).